Consider the following 1377-residue polypeptide: DNA-directed RNA polymerase subunit beta' (1377 aa).

The Zn(2+) site is built by Cys-70, Cys-72, Cys-85, and Cys-88. Mg(2+) is bound by residues Asp-460, Asp-462, and Asp-464. Zn(2+)-binding residues include Cys-808, Cys-882, Cys-889, and Cys-892.

Belongs to the RNA polymerase beta' chain family. As to quaternary structure, the RNAP catalytic core consists of 2 alpha, 1 beta, 1 beta' and 1 omega subunit. When a sigma factor is associated with the core the holoenzyme is formed, which can initiate transcription. It depends on Mg(2+) as a cofactor. Zn(2+) is required as a cofactor.

The enzyme catalyses RNA(n) + a ribonucleoside 5'-triphosphate = RNA(n+1) + diphosphate. DNA-dependent RNA polymerase catalyzes the transcription of DNA into RNA using the four ribonucleoside triphosphates as substrates. The protein is DNA-directed RNA polymerase subunit beta' of Geotalea uraniireducens (strain Rf4) (Geobacter uraniireducens).